A 548-amino-acid chain; its full sequence is MSETLNTPPTYAWVLKAFSSKLAGTVTKPVTKMSSYIEDAESDAELPQDAKEDLRPTETLTPLKSKAAQNGILKTPGTLQIKKTVNFKDISKDAATWNRPTKNNFLFTRLDDENPLMGHEEFKSPLLQSTPKPNINNPDNENKSKHDEFDNRYNININESYKNETKSNQRLGEDVPSKKKYPHSMDAEISKFKWDSNNNNDWSSLMKDCFRDVVNNNRKMKEIIKDVMIDTSQAFPSESLDEPDYTINLDAPRSSSGKYWKQKFSMLDSAHSDLELELTSIRERLESLILEKQEEINFWKQRCRALETEKIHNHQGQQSKYKGKEFVGNRFSQMRELYTAKPSPITTKVVSRPSQSDVREPQEQVPSKNLHRGADMSHLAAQMLTHSSKKSHTTNLIPSEGIISSTPISAASKVRMNLMQSNQTPTPAPFSIAAKKSHLPSKLSFPQDGGSLSSATTLQQLPKARVTPNVLSSLSSNLGKTNPTSVYQSKANVTTSADVEKPQVKVATSSRVDYDLKSPNQRTANAKKRLEERRRRRKLKLQELQLNS.

The interaction with plo1 stretch occupies residues 122–325; it reads FKSPLLQSTP…GQQSKYKGKE (204 aa). Residues 123–182 are disordered; it reads KSPLLQSTPKPNINNPDNENKSKHDEFDNRYNININESYKNETKSNQRLGEDVPSKKKYP. Polar residues predominate over residues 126-139; the sequence is LLQSTPKPNINNPD. Basic and acidic residues-rich tracts occupy residues 140 to 151 and 161 to 182; these read NENKSKHDEFDN and YKNETKSNQRLGEDVPSKKKYP. A coiled-coil region spans residues 261-312; sequence KQKFSMLDSAHSDLELELTSIRERLESLILEKQEEINFWKQRCRALETEKIH. Positions 344 to 356 are enriched in polar residues; it reads PITTKVVSRPSQS. 2 disordered regions span residues 344-369 and 510-548; these read PITTKVVSRPSQSDVREPQEQVPSKN and SRVDYDLKSPNQRTANAKKRLEERRRRRKLKLQELQLNS. Residues 522–548 are a coiled coil; the sequence is RTANAKKRLEERRRRRKLKLQELQLNS.

In terms of assembly, self-associates. Interacts with plo1.

It localises to the cytoplasm. The protein localises to the cytoskeleton. Its subcellular location is the microtubule organizing center. The protein resides in the spindle pole body. Its function is as follows. Required for bipolar spindle formation. May act as a regulator of the p34cdc2/cyclin B kinase. Required for full activation of the plo1 kinase. However, in cut12.1 cells at restrictive temperature the H1 kinase does rise concomitant with entry into mitosis, indicating that cut12 is not required for activation of p34cdc2/cyclin B. The cut12.s11 allele may promote cdc2-independent phosphorylation of SPB proteins thereby overcoming the requirement for cdc25 in cell cycle progression. The sequence is that of Spindle pole body-associated protein cut12 (cut12) from Schizosaccharomyces pombe (strain 972 / ATCC 24843) (Fission yeast).